Reading from the N-terminus, the 310-residue chain is Methionyl-tRNA formyltransferase (310 aa).

109-112 (SLLP) serves as a coordination point for (6S)-5,6,7,8-tetrahydrofolate.

It belongs to the Fmt family.

The enzyme catalyses L-methionyl-tRNA(fMet) + (6R)-10-formyltetrahydrofolate = N-formyl-L-methionyl-tRNA(fMet) + (6S)-5,6,7,8-tetrahydrofolate + H(+). Its function is as follows. Attaches a formyl group to the free amino group of methionyl-tRNA(fMet). The formyl group appears to play a dual role in the initiator identity of N-formylmethionyl-tRNA by promoting its recognition by IF2 and preventing the misappropriation of this tRNA by the elongation apparatus. The protein is Methionyl-tRNA formyltransferase of Staphylococcus epidermidis (strain ATCC 12228 / FDA PCI 1200).